Consider the following 71-residue polypeptide: Heat-stable enterotoxin A (71 aa).

A signal peptide spans 1–19 (MKKIVFVLVLMLSSFGAFG). Residues 20–53 (QETVSGQFSDALSTPITAEVYKQACDPPLPPAEV) constitute a propeptide that is removed on maturation. 3 disulfide bridges follow: C59/C64, C60/C68, and C63/C71.

The protein belongs to the heat-stable enterotoxin family.

It localises to the secreted. In terms of biological role, toxin which activates the particulate form of guanylate cyclase and increases cyclic GMP levels within the host intestinal epithelial cells. The sequence is that of Heat-stable enterotoxin A (ystA) from Yersinia enterocolitica.